Here is a 1142-residue protein sequence, read N- to C-terminus: Enamelin (1142 aa).

The N-terminal stretch at 1-39 is a signal peptide; the sequence is MLVLRCRLGTSFPKLDNLVPKGKMKILLVFLGLLGNSVA. Disordered regions lie at residues 88-193, 214-326, 398-671, 874-955, 1020-1048, and 1062-1092; these read QYQM…ISNE, YYSE…PNIR, PANL…QNRW, CCAG…LRRN, VIGTPDEGSNPEGIQSQVQENESERQQQR, and LAKHHSSTTGTPSSDGRQSPFDGDSITPTEN. A compositionally biased stretch (basic residues) spans 103 to 114; the sequence is HPRKSSAPKRHN. Asn-114 and Asn-126 each carry an N-linked (GlcNAc...) asparagine glycan. A compositionally biased stretch (polar residues) spans 117-128; it reads DQTQETQKPNQT. Residues 140–162 show a composition bias toward low complexity; the sequence is KQPSHNQPQPEEEAQPPQAFPPF. Positions 170-186 are enriched in pro residues; it reads QQPPWQIPQRLPPPGYG. Residues Ser-191 and Ser-216 each carry the phosphoserine modification. The span at 223–234 shows a compositional bias: basic and acidic residues; it reads DFEKPKEEDPPK. Over residues 240-285 the composition is skewed to polar residues; sequence TEPTANSTVTETNSTQPNPKGSQGGNDTSPTGNSTPGLNTGNNPPA. Asn-245, Asn-252, Asn-265, and Asn-296 each carry an N-linked (GlcNAc...) asparagine glycan. The segment covering 429–442 has biased composition (basic and acidic residues); the sequence is RNEKIQNPKEKPLG. Composition is skewed to polar residues over residues 452–470, 507–516, and 531–544; these read KNPTSPWRNSQQYEVNKSN, SDGQTQSQNL, and SETNQSELKHSSYQ. Asn-467 carries N-linked (GlcNAc...) asparagine glycosylation. An N-linked (GlcNAc...) asparagine glycan is attached at Asn-534. Residues 556–588 show a composition bias toward basic and acidic residues; sequence AKEHFPAGRNTWDHQEISPPFKEDPGRQEEHLP. Positions 652-661 are enriched in acidic residues; that stretch reads NEEDPVDPTG. The span at 924–934 shows a compositional bias: polar residues; that stretch reads SPTSILPGQRN. Asn-934 carries N-linked (GlcNAc...) asparagine glycosylation. The segment covering 935–951 has biased composition (basic and acidic residues); sequence SSEKRESQNPFRDDVST. Residue Asn-1040 is glycosylated (N-linked (GlcNAc...) asparagine). Residues 1068-1078 are compositionally biased toward polar residues; that stretch reads STTGTPSSDGR.

Phosphorylated by FAM20C in vitro. Expressed in tooth particularly in odontoblast, ameloblast and cementoblast.

The protein resides in the secreted. Its subcellular location is the extracellular space. It is found in the extracellular matrix. Functionally, involved in the mineralization and structural organization of enamel. Involved in the extension of enamel during the secretory stage of dental enamel formation. The protein is Enamelin (ENAM) of Homo sapiens (Human).